A 363-amino-acid polypeptide reads, in one-letter code: Dihydroorotate dehydrogenase (quinone) (363 aa).

FMN-binding positions include 62–66 (AGFDK) and threonine 86. Lysine 66 is a substrate binding site. Position 111 to 115 (111 to 115 (NRMGF)) interacts with substrate. FMN-binding residues include asparagine 142 and asparagine 175. Asparagine 175 lines the substrate pocket. Serine 178 functions as the Nucleophile in the catalytic mechanism. Position 180 (asparagine 180) interacts with substrate. Lysine 216 and threonine 244 together coordinate FMN. 245–246 (NT) is a substrate binding site. Residues glycine 267, glycine 296, and 317 to 318 (YT) contribute to the FMN site.

This sequence belongs to the dihydroorotate dehydrogenase family. Type 2 subfamily. As to quaternary structure, monomer. Requires FMN as cofactor.

The protein localises to the cell membrane. The enzyme catalyses (S)-dihydroorotate + a quinone = orotate + a quinol. The protein operates within pyrimidine metabolism; UMP biosynthesis via de novo pathway; orotate from (S)-dihydroorotate (quinone route): step 1/1. In terms of biological role, catalyzes the conversion of dihydroorotate to orotate with quinone as electron acceptor. The sequence is that of Dihydroorotate dehydrogenase (quinone) from Anaeromyxobacter sp. (strain Fw109-5).